Reading from the N-terminus, the 156-residue chain is ATP synthase subunit b (156 aa).

Residues 7–29 (LFAQMVVFLVLAWFTMKFVWPPL) form a helical membrane-spanning segment.

This sequence belongs to the ATPase B chain family. F-type ATPases have 2 components, F(1) - the catalytic core - and F(0) - the membrane proton channel. F(1) has five subunits: alpha(3), beta(3), gamma(1), delta(1), epsilon(1). F(0) has three main subunits: a(1), b(2) and c(10-14). The alpha and beta chains form an alternating ring which encloses part of the gamma chain. F(1) is attached to F(0) by a central stalk formed by the gamma and epsilon chains, while a peripheral stalk is formed by the delta and b chains.

It is found in the cell inner membrane. Its function is as follows. F(1)F(0) ATP synthase produces ATP from ADP in the presence of a proton or sodium gradient. F-type ATPases consist of two structural domains, F(1) containing the extramembraneous catalytic core and F(0) containing the membrane proton channel, linked together by a central stalk and a peripheral stalk. During catalysis, ATP synthesis in the catalytic domain of F(1) is coupled via a rotary mechanism of the central stalk subunits to proton translocation. Component of the F(0) channel, it forms part of the peripheral stalk, linking F(1) to F(0). The sequence is that of ATP synthase subunit b from Burkholderia cenocepacia (strain ATCC BAA-245 / DSM 16553 / LMG 16656 / NCTC 13227 / J2315 / CF5610) (Burkholderia cepacia (strain J2315)).